Reading from the N-terminus, the 290-residue chain is 4-hydroxy-tetrahydrodipicolinate synthase (290 aa).

Threonine 45 contributes to the pyruvate binding site. The active-site Proton donor/acceptor is the tyrosine 133. The active-site Schiff-base intermediate with substrate is lysine 161. Isoleucine 203 contributes to the pyruvate binding site.

The protein belongs to the DapA family. Homotetramer; dimer of dimers.

It is found in the cytoplasm. The enzyme catalyses L-aspartate 4-semialdehyde + pyruvate = (2S,4S)-4-hydroxy-2,3,4,5-tetrahydrodipicolinate + H2O + H(+). The protein operates within amino-acid biosynthesis; L-lysine biosynthesis via DAP pathway; (S)-tetrahydrodipicolinate from L-aspartate: step 3/4. Functionally, catalyzes the condensation of (S)-aspartate-beta-semialdehyde [(S)-ASA] and pyruvate to 4-hydroxy-tetrahydrodipicolinate (HTPA). This is 4-hydroxy-tetrahydrodipicolinate synthase from Cellvibrio japonicus (strain Ueda107) (Pseudomonas fluorescens subsp. cellulosa).